The following is a 107-amino-acid chain: Nucleoid-associated protein Hhal_0231 (107 aa).

Disordered regions lie at residues 1 to 24 and 82 to 107; these read MKGG…KAQE and VQRE…KLPF. Basic and acidic residues predominate over residues 15–24; the sequence is MQEDMQKAQE.

It belongs to the YbaB/EbfC family. Homodimer.

It is found in the cytoplasm. The protein localises to the nucleoid. Binds to DNA and alters its conformation. May be involved in regulation of gene expression, nucleoid organization and DNA protection. This is Nucleoid-associated protein Hhal_0231 from Halorhodospira halophila (strain DSM 244 / SL1) (Ectothiorhodospira halophila (strain DSM 244 / SL1)).